The sequence spans 492 residues: Catalase isozyme 2 (492 aa).

Residues His-65 and Asn-138 contribute to the active site. Tyr-348 is a binding site for heme.

Belongs to the catalase family. Homotetramer. Heme serves as cofactor.

Its subcellular location is the peroxisome. It catalyses the reaction 2 H2O2 = O2 + 2 H2O. In terms of biological role, occurs in almost all aerobically respiring organisms and serves to protect cells from the toxic effects of hydrogen peroxide. This chain is Catalase isozyme 2 (CAT2), found in Nicotiana plumbaginifolia (Leadwort-leaved tobacco).